The following is a 467-amino-acid chain: Neurexin-1-beta (467 aa).

Positions 1-45 (MYQRMLRCGAELGSPGGGGGGAGGRLALLWIVPLTLSGLLGVAWG) are cleaved as a signal peptide. Over 46–391 (ASSLGAHHIH…EVIRESSSTT (346 aa)) the chain is Extracellular. Positions 86–284 (YIFSKGGGQI…DANIAIVGNV (199 aa)) constitute a Laminin G-like domain. Ca(2+)-binding residues include Asp136 and Val153. Asn183 carries N-linked (GlcNAc...) asparagine glycosylation. Residues 200-229 (GNNDNERLAIARQRIPYRLGRVVDEWLLDK) form an essential for interaction with CBLN1; modulates interaction affinity with NLGN1, NLGN2 and NLGN3; prevents interaction with DAG1/alpha-dystroglycan; modulates interaction with alpha-latrotoxin region. Positions 235 and 237 each coordinate Ca(2+). The segment at 318-380 (LATSTARRGN…AGGREPYPGS (63 aa)) is disordered. Residues 324 to 339 (RRGNSPTKEPVSQTTD) show a composition bias toward polar residues. A glycan (O-linked (Xyl...) (heparan sulfate) serine) is linked at Ser345. A helical membrane pass occupies residues 392 to 412 (GMVVGIVAAAALCILILLYAM). Residues 413 to 467 (YKYRNRDEGSYHVDESRNYISNSAQSNGAVVKEKQPSSAKSANKNKKNKDKEYYV) are Cytoplasmic-facing. Positions 434–467 (NSAQSNGAVVKEKQPSSAKSANKNKKNKDKEYYV) are disordered. A phosphoserine mark is found at Ser449, Ser450, and Ser453.

It belongs to the neurexin family. The cytoplasmic C-terminal region binds to CASK. Binds NLGN1, NLGN2 and NLGN3, DAG1 (alpha-dystroglycan) and alpha-latrotoxin. Binding to neuroligins is calcium-dependent, and the binding preference ranks as follow: NLGN1 &gt; NLGN4 &gt;&gt; NLGN3 &gt; NLGN2. Interacts with CBLN2 and more weakly with CBLN4. Interacts with CBLN1; interaction is CBLN1 hexamer form-dependent; CBLN1-binding is calcium-independent; isoform 1b does not interact with CBLN1. Interacts with CLSTN3. Post-translationally, O-glycosylated; contains heparan sulfate. Heparan sulfate attachment is required for synapse development by mediating interactions with neuroligins.

It is found in the presynaptic cell membrane. Functionally, neuronal cell surface protein involved in cell recognition and cell adhesion by forming intracellular junctions through binding to neuroligins. Plays a role in formation of synaptic junctions. Functions as part of a trans-synaptic complex by binding to cerebellins and postsynaptic GRID1. This interaction helps regulate the activity of NMDA and AMPA receptors at hippocampal synapses without affecting synapse formation. NRXN1B-CBLN2-GRID1 complex transduce presynaptic signals into postsynaptic NMDAR response. In Bos taurus (Bovine), this protein is Neurexin-1-beta.